Consider the following 436-residue polypeptide: MSASQKEGKLSTATISVDGKSAEMPVLSGTLGPDVIDIRKLPAQLGVFTFDPGYGETAACNSKITFIDGDKGVLLHRGYPIAQLDENASYEEVIYLLLNGELPNKVQYDTFTNTLTNHTLLHEQIRNFFNGFRRDAHPMAILCGTVGALSAFYPDANDIAIPANRDLAAMRLIAKIPTIAAWAYKYTQGEAFIYPRNDLNYAENFLSMMFARMSEPYKVNPVLARAMNRILILHADHEQNASTSTVRLAGSTGANPFACIAAGIAALWGPAHGGANEAVLKMLARIGKKENIPAFIAQVKDKNSGVKLMGFGHRVYKNFDPRAKIMQQTCHEVLTELGIKDDPLLDLAVELEKIALSDDYFVQRKLYPNVDFYSGIILKAMGIPTSMFTVLFAVARTTGWVSQWKEMIEEPGQRISRPRQLYIGAPQRDYVPLAKR.

Catalysis depends on residues histidine 313 and aspartate 371.

The protein belongs to the citrate synthase family. Homohexamer.

It catalyses the reaction oxaloacetate + acetyl-CoA + H2O = citrate + CoA + H(+). Its pathway is carbohydrate metabolism; tricarboxylic acid cycle; isocitrate from oxaloacetate: step 1/2. The sequence is that of Citrate synthase (aarA) from Acetobacter aceti.